We begin with the raw amino-acid sequence, 334 residues long: Nucleoid-associated protein SG1574 (334 aa).

This sequence belongs to the YejK family.

It localises to the cytoplasm. The protein resides in the nucleoid. The sequence is that of Nucleoid-associated protein SG1574 from Sodalis glossinidius (strain morsitans).